Here is a 527-residue protein sequence, read N- to C-terminus: Glutamate--cysteine ligase (527 aa).

This sequence belongs to the glutamate--cysteine ligase type 1 family. Type 1 subfamily.

The enzyme catalyses L-cysteine + L-glutamate + ATP = gamma-L-glutamyl-L-cysteine + ADP + phosphate + H(+). The protein operates within sulfur metabolism; glutathione biosynthesis; glutathione from L-cysteine and L-glutamate: step 1/2. The protein is Glutamate--cysteine ligase of Bordetella bronchiseptica (strain ATCC BAA-588 / NCTC 13252 / RB50) (Alcaligenes bronchisepticus).